We begin with the raw amino-acid sequence, 1220 residues long: Diacylglycerol kinase delta (1220 aa).

Residues 1 to 47 form a disordered region; the sequence is MAAAAGAPPPGPPQPPPPPPPEESSDSEPEAEPGSPQKLIRKVSTSG. The regulates association with membranes stretch occupies residues 1 to 52; it reads MAAAAGAPPPGPPQPPPPPPPEESSDSEPEAEPGSPQKLIRKVSTSGQIRQK. Residues 7 to 22 are compositionally biased toward pro residues; sequence APPPGPPQPPPPPPPE. The PH domain occupies 53–146; that stretch reads TILKEGMLTK…WIAALKTVQN (94 aa). 2 consecutive Phorbol-ester/DAG-type zinc fingers follow at residues 163–213 and 235–286; these read MHNW…TSNC and PHQW…VMKC. Residues 317-451 form the DAGKc domain; sequence SCTSPLLVFV…MLDRWSVMAY (135 aa). The tract at residues 554–584 is disordered; the sequence is DDESQASSSLSNPPPTIAEEAEDGDGSGNIC. The SAM domain maps to 1151–1214; sequence WGTEEVAAWL…LCGIKELSRS (64 aa).

Belongs to the eukaryotic diacylglycerol kinase family. In terms of assembly, homooligomer. Monomer. Interacts with AP2A2; regulates clathrin-dependent endocytosis. Widely expressed.

The protein resides in the cell membrane. The protein localises to the membrane. Its subcellular location is the clathrin-coated pit. It localises to the cytoplasm. The enzyme catalyses a 1,2-diacyl-sn-glycerol + ATP = a 1,2-diacyl-sn-glycero-3-phosphate + ADP + H(+). It catalyses the reaction 1,2-di-(9Z-octadecenoyl)-sn-glycerol + ATP = 1,2-di-(9Z-octadecenoyl)-sn-glycero-3-phosphate + ADP + H(+). It carries out the reaction 1-octadecanoyl-2-(5Z,8Z,11Z,14Z-eicosatetraenoyl)-sn-glycerol + ATP = 1-octadecanoyl-2-(5Z,8Z,11Z,14Z-eicosatetraenoyl)-sn-glycero-3-phosphate + ADP + H(+). The protein operates within lipid metabolism; glycerolipid metabolism. In terms of biological role, diacylglycerol kinase that converts diacylglycerol/DAG into phosphatidic acid/phosphatidate/PA and regulates the respective levels of these two bioactive lipids. Thereby, acts as a central switch between the signaling pathways activated by these second messengers with different cellular targets and opposite effects in numerous biological processes. By controlling the levels of diacylglycerol, regulates for instance the PKC and EGF receptor signaling pathways and plays a crucial role during development. May also regulate clathrin-dependent endocytosis. The polypeptide is Diacylglycerol kinase delta (Mus musculus (Mouse)).